The sequence spans 434 residues: Asparagine--tRNA ligase (434 aa).

This sequence belongs to the class-II aminoacyl-tRNA synthetase family.

The protein resides in the cytoplasm. It carries out the reaction tRNA(Asn) + L-asparagine + ATP = L-asparaginyl-tRNA(Asn) + AMP + diphosphate + H(+). This Pyrococcus horikoshii (strain ATCC 700860 / DSM 12428 / JCM 9974 / NBRC 100139 / OT-3) protein is Asparagine--tRNA ligase.